Here is a 689-residue protein sequence, read N- to C-terminus: Glycine--tRNA ligase beta subunit (689 aa).

This sequence belongs to the class-II aminoacyl-tRNA synthetase family. Tetramer of two alpha and two beta subunits.

The protein resides in the cytoplasm. It carries out the reaction tRNA(Gly) + glycine + ATP = glycyl-tRNA(Gly) + AMP + diphosphate. The sequence is that of Glycine--tRNA ligase beta subunit from Shigella boydii serotype 18 (strain CDC 3083-94 / BS512).